A 469-amino-acid chain; its full sequence is Uronate isomerase (469 aa).

It belongs to the metallo-dependent hydrolases superfamily. Uronate isomerase family.

It carries out the reaction D-glucuronate = D-fructuronate. The catalysed reaction is aldehydo-D-galacturonate = keto-D-tagaturonate. It participates in carbohydrate metabolism; pentose and glucuronate interconversion. The protein is Uronate isomerase of Pectobacterium carotovorum subsp. carotovorum (strain PC1).